The following is a 596-amino-acid chain: Elongation factor 4 (596 aa).

One can recognise a tr-type G domain in the interval 2–184 (SHIRNFSIIA…RLVHTIPAPE (183 aa)). Residues 14-19 (DHGKST) and 131-134 (NKMD) contribute to the GTP site.

This sequence belongs to the TRAFAC class translation factor GTPase superfamily. Classic translation factor GTPase family. LepA subfamily.

It is found in the cell inner membrane. The enzyme catalyses GTP + H2O = GDP + phosphate + H(+). Its function is as follows. Required for accurate and efficient protein synthesis under certain stress conditions. May act as a fidelity factor of the translation reaction, by catalyzing a one-codon backward translocation of tRNAs on improperly translocated ribosomes. Back-translocation proceeds from a post-translocation (POST) complex to a pre-translocation (PRE) complex, thus giving elongation factor G a second chance to translocate the tRNAs correctly. Binds to ribosomes in a GTP-dependent manner. This is Elongation factor 4 from Pseudomonas putida (strain GB-1).